The sequence spans 72 residues: U1-sicaritoxin-Sdo1a (72 aa).

The N-terminal stretch at 1 to 24 (MMKKFTCFLLCATILCAIFCVSVA) is a signal peptide. Positions 25–41 (EKFHKMKSDIERDETPM) are excised as a propeptide. Intrachain disulfides connect Cys43-Cys61, Cys50-Cys64, and Cys60-Cys69.

In terms of tissue distribution, expressed by the venom gland.

Its subcellular location is the secreted. This chain is U1-sicaritoxin-Sdo1a, found in Hexophthalma dolichocephala (Afrotropical spider).